The chain runs to 361 residues: Probable dual-specificity RNA methyltransferase RlmN (361 aa).

Residue glutamate 91 is the Proton acceptor of the active site. A Radical SAM core domain is found at 97–335; it reads QHYGLSVCVT…CVVRQEHGTD (239 aa). Residues cysteine 104 and cysteine 340 are joined by a disulfide bond. [4Fe-4S] cluster contacts are provided by cysteine 111, cysteine 115, and cysteine 118. Residues 163–164, serine 195, 218–220, and asparagine 296 each bind S-adenosyl-L-methionine; these read GE and SLH. The active-site S-methylcysteine intermediate is cysteine 340.

The protein belongs to the radical SAM superfamily. RlmN family. The cofactor is [4Fe-4S] cluster.

The protein localises to the cytoplasm. It carries out the reaction adenosine(2503) in 23S rRNA + 2 reduced [2Fe-2S]-[ferredoxin] + 2 S-adenosyl-L-methionine = 2-methyladenosine(2503) in 23S rRNA + 5'-deoxyadenosine + L-methionine + 2 oxidized [2Fe-2S]-[ferredoxin] + S-adenosyl-L-homocysteine. It catalyses the reaction adenosine(37) in tRNA + 2 reduced [2Fe-2S]-[ferredoxin] + 2 S-adenosyl-L-methionine = 2-methyladenosine(37) in tRNA + 5'-deoxyadenosine + L-methionine + 2 oxidized [2Fe-2S]-[ferredoxin] + S-adenosyl-L-homocysteine. Specifically methylates position 2 of adenine 2503 in 23S rRNA and position 2 of adenine 37 in tRNAs. The chain is Probable dual-specificity RNA methyltransferase RlmN from Streptococcus mutans serotype c (strain ATCC 700610 / UA159).